A 238-amino-acid chain; its full sequence is Probable transcriptional regulatory protein SPD_1725 (238 aa).

Belongs to the TACO1 family. YeeN subfamily.

It localises to the cytoplasm. The chain is Probable transcriptional regulatory protein SPD_1725 from Streptococcus pneumoniae serotype 2 (strain D39 / NCTC 7466).